Reading from the N-terminus, the 213-residue chain is Transcription antitermination protein NusB (213 aa).

The protein belongs to the NusB family.

Its function is as follows. Involved in transcription antitermination. Required for transcription of ribosomal RNA (rRNA) genes. Binds specifically to the boxA antiterminator sequence of the ribosomal RNA (rrn) operons. This Synechococcus elongatus (strain ATCC 33912 / PCC 7942 / FACHB-805) (Anacystis nidulans R2) protein is Transcription antitermination protein NusB.